The primary structure comprises 268 residues: Indole-3-glycerol phosphate synthase (268 aa).

It belongs to the TrpC family.

The catalysed reaction is 1-(2-carboxyphenylamino)-1-deoxy-D-ribulose 5-phosphate + H(+) = (1S,2R)-1-C-(indol-3-yl)glycerol 3-phosphate + CO2 + H2O. It participates in amino-acid biosynthesis; L-tryptophan biosynthesis; L-tryptophan from chorismate: step 4/5. The chain is Indole-3-glycerol phosphate synthase from Acinetobacter baumannii (strain SDF).